Consider the following 340-residue polypeptide: 2-deoxy-scyllo-inosamine dehydrogenase (340 aa).

Zn(2+) is bound by residues C37, H59, C89, C92, C95, C103, and E144.

The protein belongs to the zinc-containing alcohol dehydrogenase family. DOIA dehydrogenase subfamily. Requires Zn(2+) as cofactor.

It catalyses the reaction 2-deoxy-scyllo-inosamine + NADP(+) = 3-amino-2,3-dideoxy-scyllo-inosose + NADPH + H(+). The enzyme catalyses 2-deoxy-scyllo-inosamine + NAD(+) = 3-amino-2,3-dideoxy-scyllo-inosose + NADH + H(+). It functions in the pathway metabolic intermediate biosynthesis; 2-deoxystreptamine biosynthesis; 2-deoxystreptamine from D-glucose 6-phosphate: step 3/4. It participates in antibiotic biosynthesis; neomycin biosynthesis. In terms of biological role, catalyzes the oxidation of 2-deoxy-scyllo-inosamine (DOIA) with NAD(+) or NADP(+), forming 3-amino-2,3-dideoxy-scyllo-inosose (amino-DOI). The chain is 2-deoxy-scyllo-inosamine dehydrogenase (neoA) from Streptomyces fradiae (Streptomyces roseoflavus).